The following is a 306-amino-acid chain: Transcription initiation factor IIB 2 (306 aa).

The TFIIB-type zinc finger occupies 6 to 37; sequence PKRVCPICGSTEFIYDPRRGEIVCAKCGYVIE. Residues Cys-10, Cys-13, Cys-29, and Cys-32 each contribute to the Zn(2+) site. 2 consecutive repeat copies span residues 123–206 and 217–298.

The protein belongs to the TFIIB family.

Its function is as follows. Stabilizes TBP binding to an archaeal box-A promoter. Also responsible for recruiting RNA polymerase II to the pre-initiation complex (DNA-TBP-TFIIB). The polypeptide is Transcription initiation factor IIB 2 (Thermococcus kodakarensis (strain ATCC BAA-918 / JCM 12380 / KOD1) (Pyrococcus kodakaraensis (strain KOD1))).